The chain runs to 193 residues: V-type ATP synthase subunit E (193 aa).

It belongs to the V-ATPase E subunit family.

Functionally, produces ATP from ADP in the presence of a proton gradient across the membrane. The sequence is that of V-type ATP synthase subunit E from Anaeromyxobacter sp. (strain Fw109-5).